We begin with the raw amino-acid sequence, 419 residues long: Tubby-like protein 4 (419 aa).

The tract at residues 1–96 (MAATKREPLR…EREEEEEGSS (96 aa)) is disordered. Residues 33-57 (AKEKEKENEVPTEIGRGKDGGEKKP) are compositionally biased toward basic and acidic residues.

This sequence belongs to the TUB family.

The protein is Tubby-like protein 4 (TULP4) of Oryza sativa subsp. japonica (Rice).